A 225-amino-acid polypeptide reads, in one-letter code: Uridylate kinase (225 aa).

7–11 (KISGS) serves as a coordination point for ATP. Position 44 (glycine 44) interacts with UMP. The ATP site is built by glycine 45 and arginine 49. Residues aspartate 66 and 114-120 (FQPGQST) contribute to the UMP site. ATP contacts are provided by tyrosine 147 and glutamate 150.

This sequence belongs to the UMP kinase family. In terms of assembly, homohexamer.

Its subcellular location is the cytoplasm. It catalyses the reaction UMP + ATP = UDP + ADP. The protein operates within pyrimidine metabolism; CTP biosynthesis via de novo pathway; UDP from UMP (UMPK route): step 1/1. Its activity is regulated as follows. Inhibited by UTP. In terms of biological role, catalyzes the reversible phosphorylation of UMP to UDP. The chain is Uridylate kinase from Aeropyrum pernix (strain ATCC 700893 / DSM 11879 / JCM 9820 / NBRC 100138 / K1).